The sequence spans 150 residues: Protein-arginine-phosphatase (150 aa).

Cys-7 acts as the Nucleophile in catalysis. 8–13 is a binding site for substrate; the sequence is TGNTCR. Arg-13 is a catalytic residue. The active-site Proton donor/acceptor is the Asp-118.

This sequence belongs to the low molecular weight phosphotyrosine protein phosphatase family.

The enzyme catalyses N(omega)-phospho-L-arginyl-[protein] + H2O = L-arginyl-[protein] + phosphate. Its activity is regulated as follows. Efficiently inhibited by Cu(2+) ion, Zn(2+) ion, sodium pyrophosphate and N-ethylmaleimide, while the addition of Mg(2+), Ca(2+) or Fe(3+) ions has minimal effect. Inhibited in a competitive manner by vanadate. Functionally, catalyzes the specific dephosphorylation of phosphoarginine residues in a large number of proteins. Counteracts the protein arginine kinase McsB in vivo. Can dephosphorylate CtsR-P; thus, can restore the DNA-binding ability of the CtsR repressor by reversing the McsB-mediated phosphorylation. Is the only active pArg phosphatase present in B.subtilis. Exhibits almost no activity against pSer, pThr, or pTyr peptides. Appears to play a role in B.subtilis stress resistance. Protein arginine phosphorylation has a physiologically important role and is involved in the regulation of many critical cellular processes, such as protein homeostasis, motility, competence, and stringent and stress responses, by regulating gene expression and protein activity. This chain is Protein-arginine-phosphatase (ywlE), found in Bacillus subtilis (strain 168).